A 227-amino-acid chain; its full sequence is tRNA (guanine-N(1)-)-methyltransferase (227 aa).

S-adenosyl-L-methionine contacts are provided by residues Gly112 and 131–136; that span reads LGDFVL.

Belongs to the RNA methyltransferase TrmD family. Homodimer.

Its subcellular location is the cytoplasm. It catalyses the reaction guanosine(37) in tRNA + S-adenosyl-L-methionine = N(1)-methylguanosine(37) in tRNA + S-adenosyl-L-homocysteine + H(+). In terms of biological role, specifically methylates guanosine-37 in various tRNAs. The chain is tRNA (guanine-N(1)-)-methyltransferase from Trichodesmium erythraeum (strain IMS101).